We begin with the raw amino-acid sequence, 201 residues long: Large ribosomal subunit protein uL4 (201 aa).

The disordered stretch occupies residues 42 to 67; the sequence is GNSAQKTRSEVSGGGKKPWNQKGTGR.

The protein belongs to the universal ribosomal protein uL4 family. Part of the 50S ribosomal subunit.

Functionally, one of the primary rRNA binding proteins, this protein initially binds near the 5'-end of the 23S rRNA. It is important during the early stages of 50S assembly. It makes multiple contacts with different domains of the 23S rRNA in the assembled 50S subunit and ribosome. Forms part of the polypeptide exit tunnel. The sequence is that of Large ribosomal subunit protein uL4 from Legionella pneumophila (strain Paris).